A 636-amino-acid chain; its full sequence is p-hydroxybenzoate-m-hydroxylase A (636 aa).

Residues 10 to 39, 241 to 243, Tyr289, and Asp310 each bind FAD; these read DIVI…HIDN and RLY. A helical membrane pass occupies residues 11 to 28; the sequence is IVIVGAGPVGIVLSLCMS.

The protein belongs to the PheA/TfdB FAD monooxygenase family. FAD serves as cofactor.

The protein resides in the membrane. It carries out the reaction 4-hydroxybenzoate + NADH + O2 + H(+) = 3,4-dihydroxybenzoate + NAD(+) + H2O. It catalyses the reaction 4-hydroxybenzoate + NADPH + O2 + H(+) = 3,4-dihydroxybenzoate + NADP(+) + H2O. Its function is as follows. FAD-dependent monooxygenase; part of the benzoic acid degradation pathway also known as the protocatechuic acid pathway. Benzoic acid debradation begins with the conversion of benzoic acid into 4-hydroxybenzoic acid through hydroxylation by the benzoate-4-monooxygenase bphA, and its partner NADPH-cytochrome P450 reductase cprA which act as a mediator in electron donation from NADPH. 4-Hydroxybenzoic acid is then converted into 3,4-dihydroxybenzoic acid (also called protocatechuic acid) by the p-hydroxybenzoate-m-hydroxylase phhA. Protocatechuic acid is converted into 3-carboxy-cis,cis-muconic acid by the intradiol ring-cleavage dioxygenase prcA, which is further metabolized through the 3-oxoadipate pathway to finally enter the tricarboxylic acid cycle (TCA). The chain is p-hydroxybenzoate-m-hydroxylase A from Aspergillus niger (strain ATCC MYA-4892 / CBS 513.88 / FGSC A1513).